The chain runs to 125 residues: Photosystem I reaction center subunit IV, chloroplastic (125 aa).

The N-terminal 34 residues, 1–34, are a transit peptide targeting the chloroplast; that stretch reads MASIASSVAVRLGLTQVLPNKNFSSPRSTRLVVR. The segment covering 42-57 has biased composition (low complexity); that stretch reads APAAASPEGEAPKAAA. The segment at 42 to 68 is disordered; it reads APAAASPEGEAPKAAAKPPPIGPKRGS.

Belongs to the PsaE family.

It is found in the plastid. The protein resides in the chloroplast thylakoid membrane. In terms of biological role, stabilizes the interaction between PsaC and the PSI core, assists the docking of the ferredoxin to PSI and interacts with ferredoxin-NADP oxidoreductase. The protein is Photosystem I reaction center subunit IV, chloroplastic (PSAE-1) of Spinacia oleracea (Spinach).